The following is a 117-amino-acid chain: Large ribosomal subunit protein bL20 (117 aa).

It belongs to the bacterial ribosomal protein bL20 family.

Its function is as follows. Binds directly to 23S ribosomal RNA and is necessary for the in vitro assembly process of the 50S ribosomal subunit. It is not involved in the protein synthesizing functions of that subunit. The protein is Large ribosomal subunit protein bL20 of Rickettsia canadensis (strain McKiel).